We begin with the raw amino-acid sequence, 162 residues long: NADH-quinone oxidoreductase subunit I (162 aa).

4Fe-4S ferredoxin-type domains are found at residues 53–83 (QRRYANGEERCIACKLCEAVCPAMAISIESE) and 93–122 (SRYDIDLTKCIFCGFCEEACPVDAIVETHI). [4Fe-4S] cluster is bound by residues C63, C66, C69, C73, C102, C105, C108, and C112.

The protein belongs to the complex I 23 kDa subunit family. In terms of assembly, NDH-1 is composed of 14 different subunits. Subunits NuoA, H, J, K, L, M, N constitute the membrane sector of the complex. Requires [4Fe-4S] cluster as cofactor.

It is found in the cell inner membrane. It carries out the reaction a quinone + NADH + 5 H(+)(in) = a quinol + NAD(+) + 4 H(+)(out). In terms of biological role, NDH-1 shuttles electrons from NADH, via FMN and iron-sulfur (Fe-S) centers, to quinones in the respiratory chain. The immediate electron acceptor for the enzyme in this species is believed to be ubiquinone. Couples the redox reaction to proton translocation (for every two electrons transferred, four hydrogen ions are translocated across the cytoplasmic membrane), and thus conserves the redox energy in a proton gradient. The sequence is that of NADH-quinone oxidoreductase subunit I from Chromobacterium violaceum (strain ATCC 12472 / DSM 30191 / JCM 1249 / CCUG 213 / NBRC 12614 / NCIMB 9131 / NCTC 9757 / MK).